Here is a 383-residue protein sequence, read N- to C-terminus: MPVEIPADSVGLVTPQTVTFSAPLELECGRSLPGYTLTYETYGTLNAQRSNAILLCHALSGDHHAAGYHSMDDRKPGWWEHLLGPGKAMDTERFFFVCANFIGSCKGSTGPASTNPETGAPWGLDFPMVTVRDWVKTQAELADYLGIEQWAAVVGGSLGGMQVMQWSMDYPERLRHAVVIAAAPKLTAQNIAFNEVCRQAIMTDPEFYNGRYYAHNTKPRRGLSLARMIGHITYLSDNAMRTKFGRDTRGGKAFSFGFDVDFEVESYLRYQGSSFVERFDANSYLYITKALDYFDPASTWGGNLAEAFASTRANFLVISFSSDWRFSPERSREIVQALYTCNRDVSYAEIEAEHGHDSFLMPIPQYVAVLSTYLGRVAEEIGA.

The AB hydrolase-1 domain occupies N51–L360. The active-site Nucleophile is the S157. R227 serves as a coordination point for substrate. Active-site residues include D323 and H356. D357 contacts substrate.

This sequence belongs to the AB hydrolase superfamily. MetX family. Homodimer.

It is found in the cytoplasm. The enzyme catalyses L-homoserine + succinyl-CoA = O-succinyl-L-homoserine + CoA. The protein operates within amino-acid biosynthesis; L-methionine biosynthesis via de novo pathway; O-succinyl-L-homoserine from L-homoserine: step 1/1. In terms of biological role, transfers a succinyl group from succinyl-CoA to L-homoserine, forming succinyl-L-homoserine. In Acidithiobacillus ferrooxidans (strain ATCC 23270 / DSM 14882 / CIP 104768 / NCIMB 8455) (Ferrobacillus ferrooxidans (strain ATCC 23270)), this protein is Homoserine O-succinyltransferase.